The chain runs to 105 residues: UPF0235 protein A1G_07140 (105 aa).

This sequence belongs to the UPF0235 family.

This Rickettsia rickettsii (strain Sheila Smith) protein is UPF0235 protein A1G_07140.